The primary structure comprises 364 residues: Probable dual-specificity RNA methyltransferase RlmN (364 aa).

The Proton acceptor role is filled by glutamate 107. Positions 113-346 constitute a Radical SAM core domain; sequence HDYGNSVCVT…ATIRREQGSD (234 aa). An intrachain disulfide couples cysteine 120 to cysteine 351. Residues cysteine 127, cysteine 131, and cysteine 134 each contribute to the [4Fe-4S] cluster site. S-adenosyl-L-methionine contacts are provided by residues 177 to 178, serine 209, 232 to 234, and asparagine 308; these read GE and SLH. Residue cysteine 351 is the S-methylcysteine intermediate of the active site.

Belongs to the radical SAM superfamily. RlmN family. Requires [4Fe-4S] cluster as cofactor.

Its subcellular location is the cytoplasm. It carries out the reaction adenosine(2503) in 23S rRNA + 2 reduced [2Fe-2S]-[ferredoxin] + 2 S-adenosyl-L-methionine = 2-methyladenosine(2503) in 23S rRNA + 5'-deoxyadenosine + L-methionine + 2 oxidized [2Fe-2S]-[ferredoxin] + S-adenosyl-L-homocysteine. The catalysed reaction is adenosine(37) in tRNA + 2 reduced [2Fe-2S]-[ferredoxin] + 2 S-adenosyl-L-methionine = 2-methyladenosine(37) in tRNA + 5'-deoxyadenosine + L-methionine + 2 oxidized [2Fe-2S]-[ferredoxin] + S-adenosyl-L-homocysteine. Functionally, specifically methylates position 2 of adenine 2503 in 23S rRNA and position 2 of adenine 37 in tRNAs. Confers resistance to some classes of antibiotics. This chain is Probable dual-specificity RNA methyltransferase RlmN, found in Staphylococcus haemolyticus (strain JCSC1435).